Here is a 156-residue protein sequence, read N- to C-terminus: NADH-ubiquinone oxidoreductase chain 6 (156 aa).

A run of 5 helical transmembrane segments spans residues 1–21 (MILT…YLAS), 24–44 (IVLG…FASF), 49–69 (FAFL…AYFL), 77–97 (ISNF…SALT), and 121–141 (STAP…VIVV).

Belongs to the complex I subunit 6 family.

Its subcellular location is the mitochondrion membrane. The enzyme catalyses a ubiquinone + NADH + 5 H(+)(in) = a ubiquinol + NAD(+) + 4 H(+)(out). Functionally, core subunit of the mitochondrial membrane respiratory chain NADH dehydrogenase (Complex I) that is believed to belong to the minimal assembly required for catalysis. Complex I functions in the transfer of electrons from NADH to the respiratory chain. The immediate electron acceptor for the enzyme is believed to be ubiquinone. This Lumbricus terrestris (Common earthworm) protein is NADH-ubiquinone oxidoreductase chain 6 (ND6).